Consider the following 719-residue polypeptide: DNA ligase (719 aa).

NAD(+) is bound by residues 42 to 46 (DAAYD), 92 to 93 (SL), and Glu-126. The active-site N6-AMP-lysine intermediate is Lys-128. NAD(+) contacts are provided by Arg-149, Glu-185, Lys-301, and Lys-325. Zn(2+)-binding residues include Cys-430, Cys-433, Cys-448, and Cys-454. The 80-residue stretch at 640–719 (ATGSPVEGKT…DDWFKLVGED (80 aa)) folds into the BRCT domain.

The protein belongs to the NAD-dependent DNA ligase family. LigA subfamily. Requires Mg(2+) as cofactor. Mn(2+) serves as cofactor.

The enzyme catalyses NAD(+) + (deoxyribonucleotide)n-3'-hydroxyl + 5'-phospho-(deoxyribonucleotide)m = (deoxyribonucleotide)n+m + AMP + beta-nicotinamide D-nucleotide.. Functionally, DNA ligase that catalyzes the formation of phosphodiester linkages between 5'-phosphoryl and 3'-hydroxyl groups in double-stranded DNA using NAD as a coenzyme and as the energy source for the reaction. It is essential for DNA replication and repair of damaged DNA. The protein is DNA ligase of Brucella melitensis biotype 2 (strain ATCC 23457).